A 350-amino-acid polypeptide reads, in one-letter code: Nicotinate-nucleotide--dimethylbenzimidazole phosphoribosyltransferase (350 aa).

The active-site Proton acceptor is the E317.

It belongs to the CobT family.

The catalysed reaction is 5,6-dimethylbenzimidazole + nicotinate beta-D-ribonucleotide = alpha-ribazole 5'-phosphate + nicotinate + H(+). It functions in the pathway nucleoside biosynthesis; alpha-ribazole biosynthesis; alpha-ribazole from 5,6-dimethylbenzimidazole: step 1/2. Functionally, catalyzes the synthesis of alpha-ribazole-5'-phosphate from nicotinate mononucleotide (NAMN) and 5,6-dimethylbenzimidazole (DMB). The protein is Nicotinate-nucleotide--dimethylbenzimidazole phosphoribosyltransferase of Shewanella sp. (strain MR-7).